A 226-amino-acid chain; its full sequence is Cytidylate kinase (226 aa).

An ATP-binding site is contributed by 10-18 (GPASSGKST).

The protein belongs to the cytidylate kinase family. Type 1 subfamily.

The protein resides in the cytoplasm. The catalysed reaction is CMP + ATP = CDP + ADP. The enzyme catalyses dCMP + ATP = dCDP + ADP. The protein is Cytidylate kinase of Enterococcus faecalis (strain ATCC 700802 / V583).